The sequence spans 107 residues: MGGKTLTRADLAEAVYRKVGLSRTESAELVEAVLDEICEAIVRGETVKLSSFATFHVRSKNERIGRNPKTGEEVPILPRRVMTFKSSNVLKNRILRSHQNSKAKGGK.

This sequence belongs to the bacterial histone-like protein family. Heterodimer of an alpha and a beta chain.

Its function is as follows. This protein is one of the two subunits of integration host factor, a specific DNA-binding protein that functions in genetic recombination as well as in transcriptional and translational control. This chain is Integration host factor subunit alpha, found in Mesorhizobium japonicum (strain LMG 29417 / CECT 9101 / MAFF 303099) (Mesorhizobium loti (strain MAFF 303099)).